The following is a 340-amino-acid chain: L-threonine 3-dehydrogenase (340 aa).

Cys38 contributes to the Zn(2+) binding site. Residues Thr40 and His43 each act as charge relay system in the active site. His63, Glu64, Cys93, Cys96, Cys99, and Cys107 together coordinate Zn(2+). NAD(+) is bound by residues Ile175, Asp195, Arg200, 262–264, and 286–287; these read LGI and IY.

This sequence belongs to the zinc-containing alcohol dehydrogenase family. As to quaternary structure, homotetramer. It depends on Zn(2+) as a cofactor.

The protein resides in the cytoplasm. The enzyme catalyses L-threonine + NAD(+) = (2S)-2-amino-3-oxobutanoate + NADH + H(+). Its pathway is amino-acid degradation; L-threonine degradation via oxydo-reductase pathway; glycine from L-threonine: step 1/2. Functionally, catalyzes the NAD(+)-dependent oxidation of L-threonine to 2-amino-3-ketobutyrate. The chain is L-threonine 3-dehydrogenase from Pseudoalteromonas atlantica (strain T6c / ATCC BAA-1087).